The primary structure comprises 1018 residues: MSSNLVALYLFSIDRSQDEANDVVDRIVEEIVTDRMGIVDLVTSIGEYLTDNNISVRAKAVLLLSQTLGELPKDRLPAKHVSVLLQFYLSRLDDEVTMKENALGIGALLNMQNFPAQKIVDVCKALFSSTDMPKYAQATRLNILKVFETIIDNYLFFISSQTRDAFFSGICSTFAGEKDPRNLMLVFSMLKKILSTFPIDGFEQQFFDITYCYFPITFRAPPDATNLAITSDDLKIALRETLVANDAFSKLLLPALFERLKASTVRIKIDALNIYIEACKTWRVGAYLWSAKDFWESIKQEILNSTDAELQNLALGALNTLASKFYKEEGFSSSFTEFVDMILIQLSQRLLEDVNVKSCGSCAAVFASLASISVETFNYCSCNFLPSVLDLPMVNEPLEKQKGMLVFLEYVYKCLVLLYGKWRSKNQADIDNPLLVYKDKQLSFVSGSLMGTAKDETEIRMLALKVIFLMASIKNFLTESELTMVLQFLDDIAFDFSDPIKKKATECLKDLGLLKPDFLLLTSFPFAFSKLTDDVTAKSSSEETFKQYLSVLVSISEERSLFKALVIRLVEMLKDQFKSKEMSVDLVESIVQSLSVAFKERNDRNEQEIPFFFEELLKQLFTLCFANCESMNVRCLIYVSQTINEIVRVNHFEFQEKFVGQLWKLYMENSNSDLIETEGCEKAAERFTLAASLSDQKFLNLVVLLQGGLNGLSKKLHFIEKLNIELLNLLINVVFVTESPGVKISALRLISSLINKCEKDEDISSFISSKGVTSLWDKVYTGTPKESEAALDVLAWVDKALVSRKHSEGIPLAFKLLDTLNLQNVGDSSVKALSIIIKDDPALSKENSYVEKLLYKQRFYASVSPKILEHISTATGGEKSLYLMLLSNVIGNVPKEIVIPDMPSILPLLLQCLSLSDISVKLSTLNVIHTSVKELTSLLTEYLDTLIPSLLAIPKDMNNPTVVRLLALKCLGSLPEFTPTTNLQLFRDKVIRGLIPCLDDPKRVVRTEASRTRHKWYI.

4 HEAT repeats span residues 857–895 (QRFY…NVPK), 899–937 (IPDM…ELTS), 940–981 (TEYL…TPTT), and 984–1018 (QLFR…KWYI).

This sequence belongs to the MET18/MMS19 family.

It localises to the cytoplasm. Its subcellular location is the nucleus. Its function is as follows. Key component of the cytosolic iron-sulfur protein assembly (CIA) machinery that mediates the incorporation of iron-sulfur cluster into apoproteins specifically involved in DNA metabolism and genomic integrity. Acts as an adapter between early-acting CIA components and a subset of cellular target iron-sulfur proteins such as rad3/xpd and dna2, thereby playing a key role in nucleotide excision repair (NER) and RNA polymerase II (POL II) transcription. The chain is DNA repair/transcription protein mms19 (mms19) from Schizosaccharomyces pombe (strain 972 / ATCC 24843) (Fission yeast).